The chain runs to 492 residues: UDP-N-acetylmuramate--L-alanine ligase (492 aa).

126–132 (GTHGKTT) is an ATP binding site.

It belongs to the MurCDEF family.

The protein localises to the cytoplasm. It carries out the reaction UDP-N-acetyl-alpha-D-muramate + L-alanine + ATP = UDP-N-acetyl-alpha-D-muramoyl-L-alanine + ADP + phosphate + H(+). The protein operates within cell wall biogenesis; peptidoglycan biosynthesis. In terms of biological role, cell wall formation. This chain is UDP-N-acetylmuramate--L-alanine ligase, found in Serratia proteamaculans (strain 568).